A 703-amino-acid chain; its full sequence is Bifunctional arginine dihydrolase/ornithine cyclodeaminase AgrE (703 aa).

The interval 10–269 is arginine dihydrolase; that stretch reads CPPDHYDVDY…GAAKCLTLRV (260 aa). L-arginine is bound by residues Asn22, Asp65, Asn71, Arg90, and Arg139. Asn22 contributes to the L-ornithine binding site. L-ornithine contacts are provided by Arg90, Arg139, and His168. The active-site Proton donor/acceptor is His168. L-arginine is bound by residues Asp170 and Ala258. Cys264 is an L-ornithine binding site. The active-site Nucleophile is Cys264. The interval 285–694 is ornithine cyclodeaminase; it reads SRIIRIEGHL…SLLTQQLDKL (410 aa). Positions 524, 525, 603, 635, 636, 637, 638, 656, 679, and 680 each coordinate NAD(+).

It in the N-terminal section; belongs to the DDAH family. This sequence in the C-terminal section; belongs to the AgrE/ArgZ ornithine cyclodeaminase family. As to quaternary structure, homotetramer. Requires NAD(+) as cofactor.

The enzyme catalyses L-arginine + 2 H2O + 2 H(+) = L-ornithine + 2 NH4(+) + CO2. It carries out the reaction L-ornithine = L-proline + NH4(+). Its activity is regulated as follows. Ornithine cyclodeaminase activity is inhibited by ATP. In terms of biological role, bifunctional enzyme involved in a cyanobacterial arginine utilization pathway that produces glutamate and enables cellular adaptation to nitrogen fluctuations. Catalyzes the hydrolysis of arginine to ornithine, with the release of ammonia and carbon dioxide. Then, catalyzes the conversion of ornithine to proline, with the release of ammonia. In Nostoc sp. (strain PCC 7120 / SAG 25.82 / UTEX 2576), this protein is Bifunctional arginine dihydrolase/ornithine cyclodeaminase AgrE.